The sequence spans 322 residues: Undecaprenyl-phosphate 4-deoxy-4-formamido-L-arabinose transferase (322 aa).

The Cytoplasmic portion of the chain corresponds to 1-235 (MFEIHPVKKV…TCLTTTPLRM (235 aa)). A helical membrane pass occupies residues 236-256 (LSLLGSIIAIGGFSIAVLLVI). The Periplasmic segment spans residues 257–269 (LRLTFGPQWAAEG). The helical transmembrane segment at 270–290 (VFMLFAVLFTFIGAQFIGMGL) threads the bilayer. Residues 291-322 (LGEYIGRIYTDVRARPRYFVQQVIRPSSKENE) lie on the Cytoplasmic side of the membrane.

This sequence belongs to the glycosyltransferase 2 family.

It is found in the cell inner membrane. It carries out the reaction UDP-4-deoxy-4-formamido-beta-L-arabinose + di-trans,octa-cis-undecaprenyl phosphate = 4-deoxy-4-formamido-alpha-L-arabinopyranosyl di-trans,octa-cis-undecaprenyl phosphate + UDP. It participates in glycolipid biosynthesis; 4-amino-4-deoxy-alpha-L-arabinose undecaprenyl phosphate biosynthesis; 4-amino-4-deoxy-alpha-L-arabinose undecaprenyl phosphate from UDP-4-deoxy-4-formamido-beta-L-arabinose and undecaprenyl phosphate: step 1/2. The protein operates within bacterial outer membrane biogenesis; lipopolysaccharide biosynthesis. Its function is as follows. Catalyzes the transfer of 4-deoxy-4-formamido-L-arabinose from UDP to undecaprenyl phosphate. The modified arabinose is attached to lipid A and is required for resistance to polymyxin and cationic antimicrobial peptides. The protein is Undecaprenyl-phosphate 4-deoxy-4-formamido-L-arabinose transferase of Shigella sonnei (strain Ss046).